A 168-amino-acid polypeptide reads, in one-letter code: Photosystem I assembly protein Ycf3 (168 aa).

3 TPR repeats span residues 35 to 68 (AFTY…EIDP), 72 to 105 (SYIL…NPFL), and 120 to 153 (GEQA…TPGN).

Belongs to the Ycf3 family.

The protein localises to the plastid. The protein resides in the chloroplast thylakoid membrane. Functionally, essential for the assembly of the photosystem I (PSI) complex. May act as a chaperone-like factor to guide the assembly of the PSI subunits. This is Photosystem I assembly protein Ycf3 from Solanum lycopersicum (Tomato).